We begin with the raw amino-acid sequence, 245 residues long: 1-(5-phosphoribosyl)-5-[(5-phosphoribosylamino)methylideneamino] imidazole-4-carboxamide isomerase (245 aa).

Catalysis depends on Asp8, which acts as the Proton acceptor. The active-site Proton donor is Asp130.

Belongs to the HisA/HisF family.

The protein resides in the cytoplasm. It carries out the reaction 1-(5-phospho-beta-D-ribosyl)-5-[(5-phospho-beta-D-ribosylamino)methylideneamino]imidazole-4-carboxamide = 5-[(5-phospho-1-deoxy-D-ribulos-1-ylimino)methylamino]-1-(5-phospho-beta-D-ribosyl)imidazole-4-carboxamide. It participates in amino-acid biosynthesis; L-histidine biosynthesis; L-histidine from 5-phospho-alpha-D-ribose 1-diphosphate: step 4/9. This is 1-(5-phosphoribosyl)-5-[(5-phosphoribosylamino)methylideneamino] imidazole-4-carboxamide isomerase from Pseudomonas putida (strain ATCC 47054 / DSM 6125 / CFBP 8728 / NCIMB 11950 / KT2440).